The following is a 489-amino-acid chain: L-asparagine permease (489 aa).

12 helical membrane passes run 38–58 (HVNM…GAGG), 62–82 (DAGP…FFVV), 113–133 (VAGW…ITAI), 150–170 (VLAL…VKIF), 175–195 (FWFA…GIFL), 223–243 (VMPV…LELV), 268–288 (VALF…SSLY), 302–322 (IGVP…AMSS), 357–377 (YGGI…NYLV), 382–402 (FEIV…IIMI), 426–446 (SPVT…LMWN), and 452–472 (RKTV…WFGV).

Belongs to the amino acid-polyamine-organocation (APC) superfamily. Amino acid transporter (AAT) (TC 2.A.3.1) family.

Its subcellular location is the cell membrane. The chain is L-asparagine permease (ansP) from Streptomyces coelicolor (strain ATCC BAA-471 / A3(2) / M145).